Consider the following 396-residue polypeptide: Protein NDRG1-B (396 aa).

The interval 326 to 396 (RSRTGSAASS…NTPKSMEVSC (71 aa)) is disordered. Residues 327-340 (SRTGSAASSSSQDG) are compositionally biased toward low complexity. A run of 4 repeats spans residues 340–349 (GNRSRSHTNE), 350–359 (GSRSRSQTGD), 360–369 (GNRSRAHTGD), and 370–379 (GNRSRSHTDT). Residues 340–379 (GNRSRSHTNEGSRSRSQTGDGNRSRAHTGDGNRSRSHTDT) are 4 X 10 AA tandem repeats of G-[NS]-R-S-R-[AS]-[HQ]-T-[DGN]-[DET]. The span at 366–377 (HTGDGNRSRSHT) shows a compositional bias: basic and acidic residues. Polar residues predominate over residues 378 to 390 (DTNNVNSDHNTPK).

This sequence belongs to the NDRG family.

Functionally, may be involved in pronephros development, after specification of the pronephros. The protein is Protein NDRG1-B (ndrg1-b) of Xenopus laevis (African clawed frog).